We begin with the raw amino-acid sequence, 160 residues long: Troponin C, skeletal muscle (160 aa).

The residue at position 2 (threonine 2) is an N-acetylthreonine. 4 consecutive EF-hand domains span residues 15-50 (EMIA…LGQT), 51-86 (PTKE…QMKE), 91-126 (KSEE…SGEH), and 127-160 (VTDE…EGVQ). Ca(2+)-binding residues include aspartate 28, aspartate 30, aspartate 34, glutamate 39, aspartate 64, aspartate 66, serine 68, threonine 70, glutamate 75, aspartate 104, asparagine 106, aspartate 108, tyrosine 110, glutamate 115, aspartate 140, asparagine 142, aspartate 144, arginine 146, and glutamate 151.

The protein belongs to the troponin C family.

Its function is as follows. Troponin is the central regulatory protein of striated muscle contraction. Tn consists of three components: Tn-I which is the inhibitor of actomyosin ATPase, Tn-T which contains the binding site for tropomyosin and Tn-C. The binding of calcium to Tn-C abolishes the inhibitory action of Tn on actin filaments. This chain is Troponin C, skeletal muscle (TNNC2), found in Homo sapiens (Human).